We begin with the raw amino-acid sequence, 1162 residues long: Paired amphipathic helix protein Sin3-like 5 (1162 aa).

Residues 1–37 (MKRVREEVYVEPQMRGPTVSSRGETNGRPSTISGGGT) form a disordered region. Residues 18 to 30 (TVSSRGETNGRPS) show a composition bias toward polar residues. PAH domains are found at residues 28-109 (RPST…LPKG) and 123-193 (KPVD…LPDF). Disordered regions lie at residues 702–727 (RVSDVSMGGHKVEREEGELSPTESCE), 743–779 (QKLPDNEISNTDREPKEGACGTEAVTRSNALPEDDDN), 803–830 (GGQVSSDEEHKGAESENEAGGMVNSNEG), and 1121–1143 (KKATLNPTGPENVKTSDSSELSR). At Ser817 the chain carries Phosphoserine. Polar residues predominate over residues 1123–1139 (ATLNPTGPENVKTSDSS).

It is found in the nucleus. Acts as a transcriptional repressor. Plays roles in regulating gene expression and genome stability. This is Paired amphipathic helix protein Sin3-like 5 (SNL5) from Arabidopsis thaliana (Mouse-ear cress).